The sequence spans 397 residues: Phosphoglycerate kinase (397 aa).

Substrate is bound by residues 21-23, R37, 60-63, R120, and R153; these read DFN and HLGR. ATP-binding positions include K206, G296, E327, and 353–356; that span reads GGDS.

Belongs to the phosphoglycerate kinase family. Monomer.

It is found in the cytoplasm. The catalysed reaction is (2R)-3-phosphoglycerate + ATP = (2R)-3-phospho-glyceroyl phosphate + ADP. It functions in the pathway carbohydrate degradation; glycolysis; pyruvate from D-glyceraldehyde 3-phosphate: step 2/5. This is Phosphoglycerate kinase from Rhodopirellula baltica (strain DSM 10527 / NCIMB 13988 / SH1).